Consider the following 274-residue polypeptide: 4-diphosphocytidyl-2-C-methyl-D-erythritol kinase (274 aa).

K7 is a catalytic residue. P90–S100 contributes to the ATP binding site. D132 is a catalytic residue.

The protein belongs to the GHMP kinase family. IspE subfamily.

The catalysed reaction is 4-CDP-2-C-methyl-D-erythritol + ATP = 4-CDP-2-C-methyl-D-erythritol 2-phosphate + ADP + H(+). It participates in isoprenoid biosynthesis; isopentenyl diphosphate biosynthesis via DXP pathway; isopentenyl diphosphate from 1-deoxy-D-xylulose 5-phosphate: step 3/6. In terms of biological role, catalyzes the phosphorylation of the position 2 hydroxy group of 4-diphosphocytidyl-2C-methyl-D-erythritol. The protein is 4-diphosphocytidyl-2-C-methyl-D-erythritol kinase of Dechloromonas aromatica (strain RCB).